Reading from the N-terminus, the 392-residue chain is Stilbene synthase 1 (392 aa).

55-58 contacts substrate; sequence KFNR. Cysteine 164 is an active-site residue. Substrate contacts are provided by residues leucine 267 and 305–307; that span reads GGP.

It belongs to the thiolase-like superfamily. Chalcone/stilbene synthases family. In terms of assembly, homodimer. In leaves, expressed in palisade and spongy parenchyma cells and, to a lesser extent, in epidermal cells after induction.

It localises to the cytoplasm. It carries out the reaction 4-coumaroyl-CoA + 3 malonyl-CoA + 3 H(+) = trans-resveratrol + 4 CO2 + 4 CoA. It functions in the pathway phytoalexin biosynthesis; 3,4',5-trihydroxystilbene biosynthesis; 3,4',5-trihydroxystilbene from trans-4-coumarate: step 2/2. In terms of biological role, mediates resistance to pathogens which are sensitive to stilbenes such as Botrytis cinerea, Eutypa lata and Plasmopora viticola by enhancing the production of phytoalexins. Confers resistance to Phytophthora palmivora when expressed in papaya. This chain is Stilbene synthase 1 (VINST1), found in Vitis vinifera (Grape).